The following is a 134-amino-acid chain: Large ribosomal subunit protein uL16c (134 aa).

The segment covering 1 to 17 (MLSPKRTRFRKQHRGRM) has biased composition (basic residues). A disordered region spans residues 1 to 21 (MLSPKRTRFRKQHRGRMKGIS).

Belongs to the universal ribosomal protein uL16 family. As to quaternary structure, part of the 50S ribosomal subunit.

The protein localises to the plastid. It localises to the chloroplast. In Solanum bulbocastanum (Wild potato), this protein is Large ribosomal subunit protein uL16c.